Consider the following 518-residue polypeptide: Membrane-bound lytic murein transglycosylase F (518 aa).

A signal peptide spans 1–21; it reads MKKLKINYLFIGILALLLAVA. The non-LT domain stretch occupies residues 22–269; that stretch reads LWPSIPWFGK…RIEEKYLGHG (248 aa). Residues 270-518 are LT domain; it reads DDFDYVDTRT…SRKGSEEKQN (249 aa). Glutamate 314 is a catalytic residue.

The protein in the N-terminal section; belongs to the bacterial solute-binding protein 3 family. This sequence in the C-terminal section; belongs to the transglycosylase Slt family.

The protein localises to the cell outer membrane. It catalyses the reaction Exolytic cleavage of the (1-&gt;4)-beta-glycosidic linkage between N-acetylmuramic acid (MurNAc) and N-acetylglucosamine (GlcNAc) residues in peptidoglycan, from either the reducing or the non-reducing ends of the peptidoglycan chains, with concomitant formation of a 1,6-anhydrobond in the MurNAc residue.. In terms of biological role, murein-degrading enzyme that degrades murein glycan strands and insoluble, high-molecular weight murein sacculi, with the concomitant formation of a 1,6-anhydromuramoyl product. Lytic transglycosylases (LTs) play an integral role in the metabolism of the peptidoglycan (PG) sacculus. Their lytic action creates space within the PG sacculus to allow for its expansion as well as for the insertion of various structures such as secretion systems and flagella. The polypeptide is Membrane-bound lytic murein transglycosylase F (Shigella boydii serotype 18 (strain CDC 3083-94 / BS512)).